Consider the following 129-residue polypeptide: Dynein 14 kDa light chain, flagellar outer arm (129 aa).

The 108-residue stretch at 2–109 folds into the Thioredoxin domain; it reads AFITEIANEA…LNRIVTELSG (108 aa). Cys34 and Cys37 are oxidised to a cystine. The tract at residues 107-129 is disordered; it reads LSGKNPPPAAPAAAPAAPAAEAS. A compositionally biased stretch (low complexity) spans 117–129; sequence PAAAPAAPAAEAS.

As to quaternary structure, consists of at least 3 heavy chains (alpha, beta and gamma), 2 intermediate chains and 8 light chains.

Its subcellular location is the cell projection. It localises to the cilium. The protein localises to the flagellum. The protein resides in the cytoplasm. It is found in the cytoskeleton. Its subcellular location is the flagellum axoneme. May be involved in regulating the redox state of functionally important thiol groups within dynein. In Chlamydomonas reinhardtii (Chlamydomonas smithii), this protein is Dynein 14 kDa light chain, flagellar outer arm.